Here is a 333-residue protein sequence, read N- to C-terminus: Replication factor C subunit 2 (333 aa).

At Ala-2 the chain carries N-acetylalanine. Position 55–62 (55–62) interacts with ATP; sequence GPPGTGKT.

The protein belongs to the activator 1 small subunits family. As to quaternary structure, heterotetramer of subunits RFC2, RFC3, RFC4 and RFC5 that can form a complex with RFC1.

The protein localises to the nucleus. In terms of biological role, may be involved in DNA replication and thus regulate cell proliferation. The polypeptide is Replication factor C subunit 2 (RFC2) (Arabidopsis thaliana (Mouse-ear cress)).